The primary structure comprises 464 residues: Na(+)/H(+) antiporter NhaA 1 (464 aa).

A run of 11 helical transmembrane segments spans residues 41–61 (GGLI…SPLA), 85–105 (LHHW…GLEL), 121–141 (VLPI…YMSL), 150–170 (GWGI…ALLA), 180–200 (FLVA…AVFY), 207–227 (SFLI…MIGI), 234–254 (FFVG…ATLA), 329–349 (VAFF…IDFG), 363–383 (VVFG…WLAI), 399–419 (IIGA…IAEL), and 428–448 (IIQA…AGYL).

This sequence belongs to the NhaA Na(+)/H(+) (TC 2.A.33) antiporter family.

It localises to the cell inner membrane. It carries out the reaction Na(+)(in) + 2 H(+)(out) = Na(+)(out) + 2 H(+)(in). Functionally, na(+)/H(+) antiporter that extrudes sodium in exchange for external protons. This is Na(+)/H(+) antiporter NhaA 1 from Saccharophagus degradans (strain 2-40 / ATCC 43961 / DSM 17024).